Here is a 196-residue protein sequence, read N- to C-terminus: MSASALVCLAPGSEETEAVTTIDLLVRGGIKVTTASVASDGNLAITCSRGVKLLADAPLVEVADGEYDVIVLPGGIKGAECFRDSTLLVETVKQFHRSGRIVAAICAAPATVLVPHDIFPIGNMTGFPTLKDKIPAEQWLDKRVVWDARVKLLTSQGPGTAIDFGLKIIDLLVGREKAHEVASQLVMAAGIYNYYE.

Cysteine 106 (nucleophile) is an active-site residue. At cysteine 106 the chain carries Cysteine sulfinic acid (-SO2H); alternate.

Belongs to the peptidase C56 family. As to quaternary structure, homodimer. In terms of processing, cys-106 is easily oxidized to sulfinic acid.

It catalyses the reaction N(omega)-(1-hydroxy-2-oxopropyl)-L-arginyl-[protein] + H2O = lactate + L-arginyl-[protein] + H(+). The catalysed reaction is N(6)-(1-hydroxy-2-oxopropyl)-L-lysyl-[protein] + H2O = lactate + L-lysyl-[protein] + H(+). It carries out the reaction S-(1-hydroxy-2-oxopropyl)-L-cysteinyl-[protein] + H2O = lactate + L-cysteinyl-[protein] + H(+). The enzyme catalyses N(omega)-(1-hydroxy-2-oxoethyl)-L-arginyl-[protein] + H2O = L-arginyl-[protein] + glycolate + H(+). It catalyses the reaction N(6)-(1-hydroxy-2-oxoethyl)-L-lysyl-[protein] + H2O = glycolate + L-lysyl-[protein] + H(+). The catalysed reaction is S-(1-hydroxy-2-oxoethyl)-L-cysteinyl-[protein] + H2O = glycolate + L-cysteinyl-[protein] + H(+). It carries out the reaction N(2)-(1-hydroxy-2-oxopropyl)-dGTP + H2O = lactate + dGTP + H(+). The enzyme catalyses N(2)-(1-hydroxy-2-oxopropyl)-GTP + H2O = lactate + GTP + H(+). It catalyses the reaction N(2)-(1-hydroxy-2-oxopropyl)-GDP + H2O = lactate + GDP + H(+). The catalysed reaction is N(2)-(1-hydroxy-2-oxopropyl)-GMP + H2O = lactate + GMP + H(+). It carries out the reaction N(2)-(1-hydroxy-2-oxoethyl)-dGTP + H2O = dGTP + glycolate + H(+). The enzyme catalyses N(2)-(1-hydroxy-2-oxoethyl)-GTP + H2O = glycolate + GTP + H(+). It catalyses the reaction N(2)-(1-hydroxy-2-oxoethyl)-GDP + H2O = glycolate + GDP + H(+). The catalysed reaction is N(2)-(1-hydroxy-2-oxoethyl)-GMP + H2O = glycolate + GMP + H(+). It carries out the reaction an N(2)-(1-hydroxy-2-oxopropyl)-guanosine in RNA + H2O = a guanosine in RNA + lactate + H(+). The enzyme catalyses an N(2)-(1-hydroxy-2-oxopropyl)-2'-deoxyguanosine in DNA + H2O = a 2'-deoxyguanosine in DNA + lactate + H(+). It catalyses the reaction an N(2)-(1-hydroxy-2-oxoethyl)-guanosine in RNA + H2O = a guanosine in RNA + glycolate + H(+). The catalysed reaction is an N(2)-(1-hydroxy-2-oxoethyl)-2'-deoxyguanosine in DNA + H2O = a 2'-deoxyguanosine in DNA + glycolate + H(+). Its activity is regulated as follows. Glyoxalase activity is inhibited by zinc ions. Active as a chaperone in both its reduced and oxidized states, and is more active in its oxidized form. Functionally, protein and nucleotide deglycase that catalyzes the deglycation of the Maillard adducts formed between amino groups of proteins or nucleotides and reactive carbonyl groups of glyoxals. Thus, functions as a protein deglycase that repairs methylglyoxal- and glyoxal-glycated proteins, and releases repaired proteins and lactate or glycolate, respectively. Deglycates cysteine, arginine and lysine residues in proteins, and thus reactivates these proteins by reversing glycation by glyoxals. Is able to repair glycated serum albumin, collagen, glyceraldehyde-3-phosphate dehydrogenase, and fructose biphosphate aldolase. Acts on early glycation intermediates (hemithioacetals and aminocarbinols), preventing the formation of Schiff bases and advanced glycation endproducts (AGE) that cause irreversible damage. Also functions as a nucleotide deglycase able to repair glycated guanine in the free nucleotide pool (GTP, GDP, GMP, dGTP) and in DNA and RNA. Is thus involved in a major nucleotide repair system named guanine glycation repair (GG repair), dedicated to reversing methylglyoxal and glyoxal damage via nucleotide sanitization and direct nucleic acid repair. However, is less efficient than Hsp31 and YhbO, suggesting that YajL might be preferentially dedicated to protein repair. Displays a covalent chaperone activity with sulfenylated thiol proteins by forming mixed disulfides with members of the thiol proteome, and preferentially with sulfenylated cellular proteins, upon oxidative stress; these mixed disulfides can be subsequently reduced by low-molecular-weight thiols to regenerate YajL and reduced proteins. Involved in biogenesis of ribosomal proteins, probably as a ribosomal protein-folding chaperone. Confers resistance to oxidative stress. Plays an important role in protection against electrophile/carbonyl stress. The chaperone activity reported for YajL is probably recruited to execute its deglycase activity, to interact with non-native glycated proteins and gain access to partially buried glycated sites. Also displays an apparent glyoxalase activity that in fact reflects its deglycase activity. This is Protein/nucleic acid deglycase 3 (yajL) from Escherichia coli (strain K12).